Reading from the N-terminus, the 309-residue chain is MPIRVPDELPAVSFLRNENVFVMASSRAKTQEIRPLKVLILNLMPKKIETENQFLRLLSNSPLQVDIQLLRVDSRESKNTPTEHLNNFYCDFEDIQDQNFDGLIVTGAPLGLVDFCDVAYWPQIERIIAWAKEHVTSTLFVCWAVQAALNILYGIPKMTREVKLSGIYQHQTLEPLALLTRGFDETFLAPHSRYADFPVEVLQQYTDLDILVSSEEAGAYLFASKDKRVAFVTGHPEYDVDTLAGEYQRDLAAGLNPQVPLNYFPSDDASLRPKASWRSHGHLLFANWLNYYVYQITPFDLRHMNPTLD.

C142 serves as the catalytic Acyl-thioester intermediate. 2 residues coordinate substrate: K163 and S192. H235 serves as the catalytic Proton acceptor. The active site involves E237. Residue R249 coordinates substrate.

It belongs to the MetA family.

It localises to the cytoplasm. The enzyme catalyses L-homoserine + succinyl-CoA = O-succinyl-L-homoserine + CoA. Its pathway is amino-acid biosynthesis; L-methionine biosynthesis via de novo pathway; O-succinyl-L-homoserine from L-homoserine: step 1/1. Transfers a succinyl group from succinyl-CoA to L-homoserine, forming succinyl-L-homoserine. This is Homoserine O-succinyltransferase from Yersinia pseudotuberculosis serotype O:1b (strain IP 31758).